We begin with the raw amino-acid sequence, 62 residues long: Large ribosomal subunit protein bL32 (62 aa).

Positions 28 to 62 are disordered; sequence SIEPTTGEVHRRHHISPDGFYRGRQVIKAKEQDEE.

Belongs to the bacterial ribosomal protein bL32 family.

The sequence is that of Large ribosomal subunit protein bL32 from Thioalkalivibrio sulfidiphilus (strain HL-EbGR7).